The sequence spans 88 residues: Small ribosomal subunit protein uS15 (88 aa).

Belongs to the universal ribosomal protein uS15 family. As to quaternary structure, part of the 30S ribosomal subunit. Forms a bridge to the 50S subunit in the 70S ribosome, contacting the 23S rRNA.

Its function is as follows. One of the primary rRNA binding proteins, it binds directly to 16S rRNA where it helps nucleate assembly of the platform of the 30S subunit by binding and bridging several RNA helices of the 16S rRNA. Functionally, forms an intersubunit bridge (bridge B4) with the 23S rRNA of the 50S subunit in the ribosome. The sequence is that of Small ribosomal subunit protein uS15 from Caldanaerobacter subterraneus subsp. tengcongensis (strain DSM 15242 / JCM 11007 / NBRC 100824 / MB4) (Thermoanaerobacter tengcongensis).